The primary structure comprises 810 residues: Probable inorganic carbon transporter subunit DabA (810 aa).

Positions 347, 349, 509, and 524 each coordinate Zn(2+).

This sequence belongs to the inorganic carbon transporter (TC 9.A.2) DabA family. Forms a complex with DabB. The cofactor is Zn(2+).

It localises to the cell inner membrane. Part of an energy-coupled inorganic carbon pump. In Marinomonas sp. (strain MWYL1), this protein is Probable inorganic carbon transporter subunit DabA.